The sequence spans 307 residues: Mycothiol acetyltransferase (307 aa).

2 consecutive N-acetyltransferase domains span residues 15–158 (HTLD…LAEP) and 164–307 (VTVR…RTES). Glutamate 46 contacts 1D-myo-inositol 2-(L-cysteinylamino)-2-deoxy-alpha-D-glucopyranoside. 90-92 (LVV) is a binding site for acetyl-CoA. 3 residues coordinate 1D-myo-inositol 2-(L-cysteinylamino)-2-deoxy-alpha-D-glucopyranoside: glutamate 191, lysine 230, and glutamate 239. Residues 243–245 (VGV) and 250–256 (QGGGLGK) contribute to the acetyl-CoA site. Tyrosine 277 is a binding site for 1D-myo-inositol 2-(L-cysteinylamino)-2-deoxy-alpha-D-glucopyranoside.

The protein belongs to the acetyltransferase family. MshD subfamily. Monomer.

It catalyses the reaction 1D-myo-inositol 2-(L-cysteinylamino)-2-deoxy-alpha-D-glucopyranoside + acetyl-CoA = mycothiol + CoA + H(+). Functionally, catalyzes the transfer of acetyl from acetyl-CoA to desacetylmycothiol (Cys-GlcN-Ins) to form mycothiol. The chain is Mycothiol acetyltransferase from Streptomyces griseus subsp. griseus (strain JCM 4626 / CBS 651.72 / NBRC 13350 / KCC S-0626 / ISP 5235).